A 224-amino-acid chain; its full sequence is Ribonuclease HII (224 aa).

The RNase H type-2 domain occupies 7 to 217 (STIMGIDEAG…SNAVIADCLQ (211 aa)). A divalent metal cation contacts are provided by D13, E14, and D111.

It belongs to the RNase HII family. Requires Mn(2+) as cofactor. It depends on Mg(2+) as a cofactor.

The protein resides in the cytoplasm. It catalyses the reaction Endonucleolytic cleavage to 5'-phosphomonoester.. Functionally, endonuclease that specifically degrades the RNA of RNA-DNA hybrids. In Methanocella arvoryzae (strain DSM 22066 / NBRC 105507 / MRE50), this protein is Ribonuclease HII.